The primary structure comprises 234 residues: MQFYNSLIEGILVKRYKRFLTDVTLLNGEEVVAHCPNTGAMIGCAEPGMQVWLSPSNNPKRKLGYTWELGVTHQGHWIGINTNNANKIVAEALATHAIQELQGYETVRPEVRFGHENSRIDFLLSSSDKKDCYVEVKSVTLLEEGQGYFPDAKTVRGQKHLRELAAMVEQGYRAVLLFCVQHSGIQSVKIAEHIDPKYAQMFKHAVDVGVEVLAYSCAINEQNITLNQRLPMIV.

This sequence belongs to the SfsA family.

The protein is Sugar fermentation stimulation protein homolog of Pseudoalteromonas atlantica (strain T6c / ATCC BAA-1087).